A 262-amino-acid polypeptide reads, in one-letter code: Adenosylcobinamide-GDP ribazoletransferase (262 aa).

A run of 4 helical transmembrane segments spans residues 43–63 (PLAGILIALPAAVTAVLLGAI), 121–141 (VALILSFGIRVSALAAFLPLL), 145–165 (GGGVALLATAALSRAAMVWHW), and 195–215 (GVILALVLFFLSGIPTVAVLL).

Belongs to the CobS family. Mg(2+) is required as a cofactor.

The protein resides in the cell inner membrane. It catalyses the reaction alpha-ribazole + adenosylcob(III)inamide-GDP = adenosylcob(III)alamin + GMP + H(+). It carries out the reaction alpha-ribazole 5'-phosphate + adenosylcob(III)inamide-GDP = adenosylcob(III)alamin 5'-phosphate + GMP + H(+). The protein operates within cofactor biosynthesis; adenosylcobalamin biosynthesis; adenosylcobalamin from cob(II)yrinate a,c-diamide: step 7/7. In terms of biological role, joins adenosylcobinamide-GDP and alpha-ribazole to generate adenosylcobalamin (Ado-cobalamin). Also synthesizes adenosylcobalamin 5'-phosphate from adenosylcobinamide-GDP and alpha-ribazole 5'-phosphate. This Sinorhizobium medicae (strain WSM419) (Ensifer medicae) protein is Adenosylcobinamide-GDP ribazoletransferase.